We begin with the raw amino-acid sequence, 85 residues long: Phosphocarrier protein HPr (85 aa).

Residues 1–85 form the HPr domain; sequence MFQQEVTITA…HLVKLMAELE (85 aa). The active-site Pros-phosphohistidine intermediate is H15.

It belongs to the HPr family.

It localises to the cytoplasm. Functionally, general (non sugar-specific) component of the phosphoenolpyruvate-dependent sugar phosphotransferase system (sugar PTS). This major carbohydrate active-transport system catalyzes the phosphorylation of incoming sugar substrates concomitantly with their translocation across the cell membrane. The phosphoryl group from phosphoenolpyruvate (PEP) is transferred to the phosphoryl carrier protein HPr by enzyme I. Phospho-HPr then transfers it to the PTS EIIA domain. This is Phosphocarrier protein HPr (ptsH) from Escherichia coli O157:H7.